The sequence spans 179 residues: Segregation and condensation protein B (179 aa).

This sequence belongs to the ScpB family. As to quaternary structure, homodimer. Homodimerization may be required to stabilize the binding of ScpA to the Smc head domains. Component of a cohesin-like complex composed of ScpA, ScpB and the Smc homodimer, in which ScpA and ScpB bind to the head domain of Smc. The presence of the three proteins is required for the association of the complex with DNA.

The protein localises to the cytoplasm. In terms of biological role, participates in chromosomal partition during cell division. May act via the formation of a condensin-like complex containing Smc and ScpA that pull DNA away from mid-cell into both cell halves. This is Segregation and condensation protein B from Staphylococcus haemolyticus (strain JCSC1435).